A 216-amino-acid chain; its full sequence is Large ribosomal subunit protein uL3 (216 aa).

A disordered region spans residues 137-158; the sequence is GASHGAHKNHRKPGSIGGASTP.

It belongs to the universal ribosomal protein uL3 family. In terms of assembly, part of the 50S ribosomal subunit. Forms a cluster with proteins L14 and L19.

Its function is as follows. One of the primary rRNA binding proteins, it binds directly near the 3'-end of the 23S rRNA, where it nucleates assembly of the 50S subunit. This is Large ribosomal subunit protein uL3 from Pseudarthrobacter chlorophenolicus (strain ATCC 700700 / DSM 12829 / CIP 107037 / JCM 12360 / KCTC 9906 / NCIMB 13794 / A6) (Arthrobacter chlorophenolicus).